The sequence spans 233 residues: Aspartate/glutamate leucyltransferase (233 aa).

It belongs to the R-transferase family. Bpt subfamily.

It is found in the cytoplasm. It catalyses the reaction N-terminal L-glutamyl-[protein] + L-leucyl-tRNA(Leu) = N-terminal L-leucyl-L-glutamyl-[protein] + tRNA(Leu) + H(+). The catalysed reaction is N-terminal L-aspartyl-[protein] + L-leucyl-tRNA(Leu) = N-terminal L-leucyl-L-aspartyl-[protein] + tRNA(Leu) + H(+). In terms of biological role, functions in the N-end rule pathway of protein degradation where it conjugates Leu from its aminoacyl-tRNA to the N-termini of proteins containing an N-terminal aspartate or glutamate. The chain is Aspartate/glutamate leucyltransferase from Vibrio campbellii (strain ATCC BAA-1116).